The sequence spans 115 residues: NADH-ubiquinone oxidoreductase chain 3 (115 aa).

A run of 3 helical transmembrane segments spans residues 4 to 24, 55 to 75, and 87 to 107; these read FIVL…AFWL, FFLV…LLPL, and TMLT…YEWL.

It belongs to the complex I subunit 3 family. Core subunit of respiratory chain NADH dehydrogenase (Complex I) which is composed of 45 different subunits. Interacts with TMEM186. Interacts with TMEM242.

The protein localises to the mitochondrion inner membrane. It catalyses the reaction a ubiquinone + NADH + 5 H(+)(in) = a ubiquinol + NAD(+) + 4 H(+)(out). Functionally, core subunit of the mitochondrial membrane respiratory chain NADH dehydrogenase (Complex I) which catalyzes electron transfer from NADH through the respiratory chain, using ubiquinone as an electron acceptor. Essential for the catalytic activity of complex I. The polypeptide is NADH-ubiquinone oxidoreductase chain 3 (Reithrodontomys megalotis (Western harvest mouse)).